A 368-amino-acid chain; its full sequence is MSVEYKQKNDVPDLYKILGLTNDVCKESDCDERIRKAYARKAKKYHPDKYPGKKDIVEIFELITMAYDVLKDEKQRNEYNQRLIVEKQACSDYLKLKKRYNDFADSIGELKEPSNEQKLSFKEQMKAINSKHGYDTSQETAIPANQAKKKLSSLAKERASQDVNLRPEKLFDDGRFDLGTFNAVFDKYHKKSDSSIMPHNGVPSAWNEPTNSMNFSSFDNLDNIYVDDNSRLDISRQMFGDIDFGSSLPKISKQDISDIGRADYVDGHKVLGDDYYKDLKSKISEREKDSDLFDKMKYGDYKKDTAGYGVLDQLGCDFSEIYLDKCLPGSLEEQVEKLMAERKKVIPPTEFQYLSAPVSSRTNGSVGR.

Residues 13–83 (DLYKILGLTN…KQRNEYNQRL (71 aa)) enclose the J domain.

In Acanthamoeba polyphaga mimivirus (APMV), this protein is Putative J domain-containing protein R445.